The following is a 371-amino-acid chain: Dual-specificity RNA methyltransferase RlmN (371 aa).

E86 functions as the Proton acceptor in the catalytic mechanism. In terms of domain architecture, Radical SAM core spans 105-338 (RHARYTICVS…CTIRQSKGLD (234 aa)). Cysteines 112 and 343 form a disulfide. Positions 119, 123, and 126 each coordinate [4Fe-4S] cluster. Residues 169 to 170 (GE), S201, 224 to 226 (SLH), and N300 contribute to the S-adenosyl-L-methionine site. Catalysis depends on C343, which acts as the S-methylcysteine intermediate. A compositionally biased stretch (polar residues) spans 348-363 (QRSQNLSPSNNNTSKP). The interval 348 to 371 (QRSQNLSPSNNNTSKPSDIKKSES) is disordered.

This sequence belongs to the radical SAM superfamily. RlmN family. Requires [4Fe-4S] cluster as cofactor.

The protein resides in the cytoplasm. It carries out the reaction adenosine(2503) in 23S rRNA + 2 reduced [2Fe-2S]-[ferredoxin] + 2 S-adenosyl-L-methionine = 2-methyladenosine(2503) in 23S rRNA + 5'-deoxyadenosine + L-methionine + 2 oxidized [2Fe-2S]-[ferredoxin] + S-adenosyl-L-homocysteine. The enzyme catalyses adenosine(37) in tRNA + 2 reduced [2Fe-2S]-[ferredoxin] + 2 S-adenosyl-L-methionine = 2-methyladenosine(37) in tRNA + 5'-deoxyadenosine + L-methionine + 2 oxidized [2Fe-2S]-[ferredoxin] + S-adenosyl-L-homocysteine. In terms of biological role, specifically methylates position 2 of adenine 2503 in 23S rRNA and position 2 of adenine 37 in tRNAs. m2A2503 modification seems to play a crucial role in the proofreading step occurring at the peptidyl transferase center and thus would serve to optimize ribosomal fidelity. The sequence is that of Dual-specificity RNA methyltransferase RlmN from Campylobacter curvus (strain 525.92).